The primary structure comprises 656 residues: Receptor-type tyrosine-protein phosphatase R (656 aa).

An N-terminal signal peptide occupies residues methionine 1–serine 23. Serine 23 carries an O-linked (Xyl...) (chondroitin sulfate) serine glycan. Over asparagine 25–glutamate 225 the chain is Extracellular. N-linked (GlcNAc...) asparagine glycosylation is present at asparagine 128. The chain crosses the membrane as a helical span at residues glycine 226–tyrosine 248. Over arginine 249–glutamine 656 the chain is Cytoplasmic. At serine 271 the chain carries Phosphoserine. Position 338 is a phosphoserine; by PKA (serine 338). The Tyrosine-protein phosphatase domain occupies leucine 392 to phenylalanine 646. Substrate contacts are provided by residues aspartate 553, cysteine 587 to arginine 593, and glutamine 631. The Phosphocysteine intermediate role is filled by cysteine 587.

Belongs to the protein-tyrosine phosphatase family. Receptor class 7 subfamily. Interacts with MAPKs. In terms of tissue distribution, widely expressed in the brain, most abundant in cerebellum, midbrain, cerebral cortex and hippocampus. Also expressed in heart and skeletal muscle.

It localises to the cytoplasm. Its subcellular location is the cell membrane. The enzyme catalyses O-phospho-L-tyrosyl-[protein] + H2O = L-tyrosyl-[protein] + phosphate. In terms of biological role, sequesters mitogen-activated protein kinases (MAPKs) such as MAPK1, MAPK3 and MAPK14 in the cytoplasm in an inactive form. The MAPKs bind to a dephosphorylated kinase interacting motif, phosphorylation of which by the protein kinase A complex releases the MAPKs for activation and translocation into the nucleus. The chain is Receptor-type tyrosine-protein phosphatase R (Ptprr) from Rattus norvegicus (Rat).